Reading from the N-terminus, the 575-residue chain is Homocysteine/cysteine synthase (575 aa).

N6-(pyridoxal phosphate)lysine is present on Lys376.

It belongs to the trans-sulfuration enzymes family. MET7 subfamily. Requires pyridoxal 5'-phosphate as cofactor.

It localises to the cytoplasm. The enzyme catalyses O-acetyl-L-homoserine + methanethiol = L-methionine + acetate + H(+). The catalysed reaction is O-acetyl-L-homoserine + hydrogen sulfide = L-homocysteine + acetate. It carries out the reaction O-acetyl-L-serine + hydrogen sulfide = L-cysteine + acetate. It functions in the pathway amino-acid biosynthesis; L-methionine biosynthesis via de novo pathway; L-homocysteine from O-acetyl-L-homoserine. Plays a role in inorganic sulfur assimilation during sulfur-limited conditions; catalyzes the conversion of O-acetyl-L-homoserine (OAH) into homocysteine in the methionine biosynthesis pathway. Also catalyzes the conversion of O-acetylserine (OAS) into cysteine, the last step in the cysteine biosynthesis pathway. However, it seems that in S.cerevisiae cysteine biosynthesis occurs exclusively through the cystathionine pathway and not via direct incorporation of sulfur into OAS. It therefore has no metabolic role in cysteine biosynthesis and may only have a regulatory role controlling OAS levels. The protein is Homocysteine/cysteine synthase of Saccharomyces cerevisiae (strain ATCC 204508 / S288c) (Baker's yeast).